Reading from the N-terminus, the 249-residue chain is Chymase (249 aa).

The N-terminal stretch at 1–19 is a signal peptide; the sequence is MHCLPLTLLLLLLCSRAEA. Positions 20–21 are cleaved as a propeptide — activation peptide; it reads EE. The 224-residue stretch at 22–245 folds into the Peptidase S1 domain; the sequence is IIGGTESKPH…YRPWINKVLK (224 aa). The cysteines at positions 51 and 67 are disulfide-linked. Residues His-66 and Asp-110 each act as charge relay system in the active site. 2 disulfide bridges follow: Cys-144/Cys-209 and Cys-175/Cys-188. The Charge relay system role is filled by Ser-203.

The protein belongs to the peptidase S1 family. Granzyme subfamily.

It is found in the secreted. The protein localises to the cytoplasmic granule. The catalysed reaction is Preferential cleavage: Phe-|-Xaa &gt; Tyr-|-Xaa &gt; Trp-|-Xaa &gt; Leu-|-Xaa.. Its function is as follows. Major secreted protease of mast cells with suspected roles in vasoactive peptide generation, extracellular matrix degradation, and regulation of gland secretion. This chain is Chymase (CMA1), found in Canis lupus familiaris (Dog).